A 701-amino-acid chain; its full sequence is DNA ligase (701 aa).

NAD(+) is bound by residues 43–47, 92–93, and Glu-126; these read DADYD and SL. Catalysis depends on Lys-128, which acts as the N6-AMP-lysine intermediate. 4 residues coordinate NAD(+): Arg-149, Glu-186, Lys-302, and Lys-326. Residues Cys-417, Cys-420, Cys-440, and Cys-446 each coordinate Zn(2+). In terms of domain architecture, BRCT spans 622–701; sequence ETGSPVTGKT…DEWLALIGET (80 aa).

It belongs to the NAD-dependent DNA ligase family. LigA subfamily. Mg(2+) is required as a cofactor. The cofactor is Mn(2+).

It catalyses the reaction NAD(+) + (deoxyribonucleotide)n-3'-hydroxyl + 5'-phospho-(deoxyribonucleotide)m = (deoxyribonucleotide)n+m + AMP + beta-nicotinamide D-nucleotide.. In terms of biological role, DNA ligase that catalyzes the formation of phosphodiester linkages between 5'-phosphoryl and 3'-hydroxyl groups in double-stranded DNA using NAD as a coenzyme and as the energy source for the reaction. It is essential for DNA replication and repair of damaged DNA. In Hyphomonas neptunium (strain ATCC 15444), this protein is DNA ligase.